The following is a 255-amino-acid chain: Gene 54 protein (255 aa).

The sequence is that of Gene 54 protein (54) from Mycobacterium phage D29 (Mycobacteriophage D29).